Here is a 435-residue protein sequence, read N- to C-terminus: MLQCAPKKNERLRGSCDFCTQSKLRCNKNKPSCRRCTIQQQVCVYSVARRTGRPPKHPRRADDSQETSGQHGHQDPMTSAPADSCEQQSSHLDLEGDDTDFTLVDGRTTAEGRATVAPPVLDNAFLMGETFEFNSLLDDPLVQSEDIFSFSPHIPRGEKGVHMASFHALNESTSPCSPSALLSIDVPQLPTNFRFLESFIGSELHGRNEPHPVEQPDEMEKTYDKGSILLGLDSAINAITNNGKDEPSISGWTVARPHSKHLCFCSMSMSKLQVLVSHPALCRQNSRTPFDMVLFLEEFVFGIHSDVLRCLICQSRSLHSLASLCICTDWVVEALVDVAQDLSLGQDNLGGLRAEICPPKNGSSIYVGRLILADQFRESCTRSLVKYRLRKLIPIMDTMIKLNYRGAGGALSQAIRTMVEDVRHKIESALGMMEL.

Residues 16 to 43 (CDFCTQSKLRCNKNKPSCRRCTIQQQVC) constitute a DNA-binding region (zn(2)-C6 fungal-type). The segment at 49–103 (RRTGRPPKHPRRADDSQETSGQHGHQDPMTSAPADSCEQQSSHLDLEGDDTDFTL) is disordered. A compositionally biased stretch (basic residues) spans 50–59 (RTGRPPKHPR).

It is found in the nucleus. Its function is as follows. Transcription factor that regulates the expression of the gene clusters that mediate the biosynthesis of the host-selective toxins (HSTs) AK-toxins responsible for Japanese pear black spot disease by the Japanese pear pathotype. AK-toxins are esters of 9,10-epoxy 8-hydroxy 9-methyldecatrienoic acid (EDA). On cellular level, AK-toxins affect plasma membrane of susceptible cells and cause a sudden increase in loss of K(+) after a few minutes of toxin treatment. The protein is Transcription activator AKTR-2 of Alternaria alternata (Alternaria rot fungus).